A 130-amino-acid chain; its full sequence is UPF0102 protein Cthe_0758 (130 aa).

It belongs to the UPF0102 family.

This chain is UPF0102 protein Cthe_0758, found in Acetivibrio thermocellus (strain ATCC 27405 / DSM 1237 / JCM 9322 / NBRC 103400 / NCIMB 10682 / NRRL B-4536 / VPI 7372) (Clostridium thermocellum).